The sequence spans 180 residues: Large ribosomal subunit protein uL5c (180 aa).

This sequence belongs to the universal ribosomal protein uL5 family. In terms of assembly, part of the 50S ribosomal subunit; contacts the 5S rRNA.

It localises to the plastid. It is found in the chloroplast. Binds 5S rRNA, forms part of the central protuberance of the 50S subunit. This is Large ribosomal subunit protein uL5c (rpl5) from Oltmannsiellopsis viridis (Marine flagellate).